Consider the following 346-residue polypeptide: Ribosomal RNA small subunit methyltransferase H (346 aa).

Residues 53–55 (GGY), aspartate 70, phenylalanine 97, aspartate 114, and glutamine 121 contribute to the S-adenosyl-L-methionine site.

The protein belongs to the methyltransferase superfamily. RsmH family.

It is found in the cytoplasm. The catalysed reaction is cytidine(1402) in 16S rRNA + S-adenosyl-L-methionine = N(4)-methylcytidine(1402) in 16S rRNA + S-adenosyl-L-homocysteine + H(+). Specifically methylates the N4 position of cytidine in position 1402 (C1402) of 16S rRNA. This chain is Ribosomal RNA small subunit methyltransferase H, found in Bartonella henselae (strain ATCC 49882 / DSM 28221 / CCUG 30454 / Houston 1) (Rochalimaea henselae).